A 147-amino-acid chain; its full sequence is Large ribosomal subunit protein bL9 (147 aa).

The protein belongs to the bacterial ribosomal protein bL9 family.

Its function is as follows. Binds to the 23S rRNA. This chain is Large ribosomal subunit protein bL9, found in Mycoplasmoides gallisepticum (strain R(low / passage 15 / clone 2)) (Mycoplasma gallisepticum).